We begin with the raw amino-acid sequence, 1103 residues long: Trophozoite exported protein 1 (1103 aa).

The stretch at 173-212 (KKEKIEDKKYEQDDEEENEEEEEEEEEEEGEEENKEDEEF) forms a coiled coil. 2 disordered regions span residues 178-210 (EDKK…KEDE) and 271-301 (KSYS…DNGK). Residues 184 to 210 (QDDEEENEEEEEEEEEEEGEEENKEDE) are compositionally biased toward acidic residues. Over residues 271 to 280 (KSYSGDEKIN) the composition is skewed to basic and acidic residues. Coiled-coil stretches lie at residues 304-330 (DYVK…LECN) and 478-518 (YKNY…KLNN). The segment at 544–601 (YFDEGENPYNRNNKNYRTDNKNSDDNNNNNNYYYNNYNSDDNYNSEDNEYNNGNYRFR) is disordered. Residues 568 to 585 (DNNNNNNYYYNNYNSDDN) are compositionally biased toward low complexity. Coiled-coil stretches lie at residues 650–791 (FRNL…LSGI), 819–932 (DEKY…IYKK), and 993–1030 (NKKL…NLSK). The RING-type zinc-finger motif lies at 1050 to 1089 (CSVCMENFRNYIIIKCGHIYCNNCIFNNLKTRNRKCPQCK).

The protein resides in the host cell membrane. In Plasmodium falciparum (isolate 3D7), this protein is Trophozoite exported protein 1.